A 247-amino-acid polypeptide reads, in one-letter code: ATP synthase subunit a, chloroplastic (247 aa).

Transmembrane regions (helical) follow at residues 38 to 58 (QVLI…TLAV), 95 to 115 (VPFI…GALL), 134 to 154 (INTT…AGLT), 199 to 219 (LVVV…VMFL), and 220 to 240 (GLFT…AYIG).

It belongs to the ATPase A chain family. As to quaternary structure, F-type ATPases have 2 components, CF(1) - the catalytic core - and CF(0) - the membrane proton channel. CF(1) has five subunits: alpha(3), beta(3), gamma(1), delta(1), epsilon(1). CF(0) has four main subunits: a, b, b' and c.

It is found in the plastid. Its subcellular location is the chloroplast thylakoid membrane. Key component of the proton channel; it plays a direct role in the translocation of protons across the membrane. This chain is ATP synthase subunit a, chloroplastic, found in Vitis vinifera (Grape).